Here is a 431-residue protein sequence, read N- to C-terminus: Enolase (431 aa).

Q167 provides a ligand contact to (2R)-2-phosphoglycerate. E209 acts as the Proton donor in catalysis. D246, E290, and D317 together coordinate Mg(2+). The (2R)-2-phosphoglycerate site is built by K342, R371, S372, and K393. Catalysis depends on K342, which acts as the Proton acceptor.

The protein belongs to the enolase family. Component of the RNA degradosome, a multiprotein complex involved in RNA processing and mRNA degradation. It depends on Mg(2+) as a cofactor.

The protein localises to the cytoplasm. Its subcellular location is the secreted. It is found in the cell surface. It catalyses the reaction (2R)-2-phosphoglycerate = phosphoenolpyruvate + H2O. The protein operates within carbohydrate degradation; glycolysis; pyruvate from D-glyceraldehyde 3-phosphate: step 4/5. Functionally, catalyzes the reversible conversion of 2-phosphoglycerate (2-PG) into phosphoenolpyruvate (PEP). It is essential for the degradation of carbohydrates via glycolysis. The polypeptide is Enolase (Serratia proteamaculans (strain 568)).